A 337-amino-acid polypeptide reads, in one-letter code: Glucokinase (337 aa).

11-16 (ADIGGT) serves as a coordination point for ATP.

The protein belongs to the bacterial glucokinase family.

It localises to the cytoplasm. It carries out the reaction D-glucose + ATP = D-glucose 6-phosphate + ADP + H(+). This is Glucokinase from Xylella fastidiosa (strain 9a5c).